The primary structure comprises 292 residues: Elongation factor Ts (292 aa).

Residues Thr82–Val85 are involved in Mg(2+) ion dislocation from EF-Tu.

The protein belongs to the EF-Ts family.

Its subcellular location is the cytoplasm. Functionally, associates with the EF-Tu.GDP complex and induces the exchange of GDP to GTP. It remains bound to the aminoacyl-tRNA.EF-Tu.GTP complex up to the GTP hydrolysis stage on the ribosome. The protein is Elongation factor Ts of Bordetella bronchiseptica (strain ATCC BAA-588 / NCTC 13252 / RB50) (Alcaligenes bronchisepticus).